Reading from the N-terminus, the 392-residue chain is GDP-mannose transporter (392 aa).

Over residues 1–11 (MDDKKNEDLEM) the composition is skewed to basic and acidic residues. Positions 1–25 (MDDKKNEDLEMRNFNGRSSPSQRDP) are disordered. The Cytoplasmic portion of the chain corresponds to 1–45 (MDDKKNEDLEMRNFNGRSSPSQRDPFLAKPGAAAKRGNSAFDLSN). The helical transmembrane segment at 46–66 (VTNSPGISILAYCLASISMTV) threads the bilayer. Residues 67-76 (TNKYCVSGSN) are Lumenal-facing. A helical transmembrane segment spans residues 77–97 (WNLNFFYLAIQSVVCIIAIII). At 98-116 (CKQAGLITNLAPFDTKKAK) the chain is on the cytoplasmic side. The chain crosses the membrane as a helical span at residues 117-139 (TWFPISLLLVGMIYTSTKALQFL). At 140–142 (SVP) the chain is on the lumenal side. The helical transmembrane segment at 143–165 (VYTIFKNLTIIVIAYGEVLWFGG) threads the bilayer. The Cytoplasmic segment spans residues 166-171 (SVTPSA). Residues 172-191 (LFSFGLMVLSSVVAAWADIQ) form a helical membrane-spanning segment. The Lumenal segment spans residues 192–210 (HALYGGGAAQSAEAAAALS). A helical membrane pass occupies residues 211 to 231 (TLNAGYAWMGMNVFCTAAYVL). The Cytoplasmic segment spans residues 232–246 (SMRKVIKKMNFKDWD). A helical transmembrane segment spans residues 247–267 (TMFYNNLLTIPVLFVCSFIFE). 2 N-linked (GlcNAc...) asparagine glycosylation sites follow: asparagine 268 and asparagine 273. Residues 268 to 285 (NWSSENLTKNFPLETRNN) lie on the Lumenal side of the membrane. A helical transmembrane segment spans residues 286–306 (LILGMIYSGLATIFISYCSAW). Residues 307 to 314 (CIRVTSST) are Cytoplasmic-facing. The chain crosses the membrane as a helical span at residues 315–337 (TYSMVGALNKLPIAVSGLVFFAA). At 338-340 (PVT) the chain is on the lumenal side. A helical transmembrane segment spans residues 341 to 360 (FGSVSAIFIGFVSGIVYAWA). Topologically, residues 361 to 392 (KVRQNQSKGNILPTTQPVMSASSQSNRDAAKA) are cytoplasmic. The disordered stretch occupies residues 373–392 (PTTQPVMSASSQSNRDAAKA).

This sequence belongs to the TPT transporter family. SLC35D subfamily. As to quaternary structure, homooligomer.

It localises to the golgi apparatus membrane. It is found in the cytoplasmic vesicle membrane. Its subcellular location is the endoplasmic reticulum membrane. In terms of biological role, involved in the import of GDP-mannose from the cytoplasm into the Golgi lumen. This Botryotinia fuckeliana (strain B05.10) (Noble rot fungus) protein is GDP-mannose transporter (gmt1).